Here is a 226-residue protein sequence, read N- to C-terminus: 7-cyano-7-deazaguanine synthase (226 aa).

Residue 7–17 (LSGGMDSLVTT) participates in ATP binding. Residues cysteine 187, cysteine 195, cysteine 198, and cysteine 201 each contribute to the Zn(2+) site.

It belongs to the QueC family. Requires Zn(2+) as cofactor.

The enzyme catalyses 7-carboxy-7-deazaguanine + NH4(+) + ATP = 7-cyano-7-deazaguanine + ADP + phosphate + H2O + H(+). The protein operates within purine metabolism; 7-cyano-7-deazaguanine biosynthesis. Functionally, catalyzes the ATP-dependent conversion of 7-carboxy-7-deazaguanine (CDG) to 7-cyano-7-deazaguanine (preQ(0)). The protein is 7-cyano-7-deazaguanine synthase of Chloroherpeton thalassium (strain ATCC 35110 / GB-78).